The primary structure comprises 156 residues: 6,7-dimethyl-8-ribityllumazine synthase (156 aa).

5-amino-6-(D-ribitylamino)uracil is bound by residues phenylalanine 22, 57–59 (AYE), and 81–83 (TVI). Residue 86-87 (GT) coordinates (2S)-2-hydroxy-3-oxobutyl phosphate. Histidine 89 acts as the Proton donor in catalysis. Residue phenylalanine 114 coordinates 5-amino-6-(D-ribitylamino)uracil. Arginine 128 contributes to the (2S)-2-hydroxy-3-oxobutyl phosphate binding site.

It belongs to the DMRL synthase family. As to quaternary structure, forms an icosahedral capsid composed of 60 subunits, arranged as a dodecamer of pentamers.

It carries out the reaction (2S)-2-hydroxy-3-oxobutyl phosphate + 5-amino-6-(D-ribitylamino)uracil = 6,7-dimethyl-8-(1-D-ribityl)lumazine + phosphate + 2 H2O + H(+). It participates in cofactor biosynthesis; riboflavin biosynthesis; riboflavin from 2-hydroxy-3-oxobutyl phosphate and 5-amino-6-(D-ribitylamino)uracil: step 1/2. Its function is as follows. Catalyzes the formation of 6,7-dimethyl-8-ribityllumazine by condensation of 5-amino-6-(D-ribitylamino)uracil with 3,4-dihydroxy-2-butanone 4-phosphate. This is the penultimate step in the biosynthesis of riboflavin. The chain is 6,7-dimethyl-8-ribityllumazine synthase from Enterobacter sp. (strain 638).